The following is a 1220-amino-acid chain: Protein transport protein Sec31A (1220 aa).

WD repeat units follow at residues lysine 4–glutamate 47, arginine 68–lysine 111, lysine 120–threonine 160, glutamine 166–lysine 206, aspartate 209–arginine 254, asparagine 258–glutamate 298, and threonine 301–arginine 342. Positions proline 161–lysine 471 are interaction with SEC13. Residues serine 397–serine 430 form a WD 8; interaction with SEC13 repeat. Residues serine 527 and serine 532 each carry the phosphoserine modification. Residue lysine 647 forms a Glycyl lysine isopeptide (Lys-Gly) (interchain with G-Cter in ubiquitin) linkage. Disordered regions lie at residues glycine 791 to proline 908 and glutamine 924 to phenylalanine 1096. Position 799 is a phosphoserine (serine 799). The interval proline 800–proline 1113 is interaction with PDCD6. The ALG-2-binding site motif-2 (ABS-2) signature appears at glycine 842–asparagine 848. Over residues valine 849–threonine 859 the composition is skewed to polar residues. Over residues proline 869–proline 882 the composition is skewed to pro residues. Residues proline 962–glycine 972 show a composition bias toward low complexity. Composition is skewed to polar residues over residues proline 984–tryptophan 995 and proline 1031–proline 1053. Threonine 1161 is modified (phosphothreonine). At serine 1163 the chain carries Phosphoserine. Lysine 1217 participates in a covalent cross-link: Glycyl lysine isopeptide (Lys-Gly) (interchain with G-Cter in ubiquitin).

The protein belongs to the WD repeat SEC31 family. In terms of assembly, COPII is composed of at least 5 proteins: the SEC23/24 complex, the SEC13/31 complex and SAR1. SEC13 and SEC31 make a 2:2 tetramer that forms the edge element of the COPII outer coat. The tetramer self-assembles in multiple copies to form the complete polyhedral cage. Interacts (via WD 8) with SEC13. Interacts with PDCD6; interaction takes place in response to cytosolic calcium increase and leads to bridge together the BCR(KLHL12) complex and SEC31A, leading to monoubiquitination. Interacts with KLHL12. In terms of processing, monoubiquitinated by the BCR(KLHL12) E3 ubiquitin ligase complex, leading to regulate the size of COPII coats. As to expression, abundantly and ubiquitously expressed.

It is found in the cytoplasm. The protein localises to the cytoplasmic vesicle. The protein resides in the COPII-coated vesicle membrane. Its subcellular location is the endoplasmic reticulum membrane. It localises to the cytosol. In terms of biological role, component of the coat protein complex II (COPII) which promotes the formation of transport vesicles from the endoplasmic reticulum (ER). The coat has two main functions, the physical deformation of the endoplasmic reticulum membrane into vesicles and the selection of cargo molecules. This Homo sapiens (Human) protein is Protein transport protein Sec31A (SEC31A).